The primary structure comprises 474 residues: Aspartate ammonia-lyase (474 aa).

L-aspartate contacts are provided by Thr-105, Ser-144, Thr-145, Asn-146, and Thr-191. The tract at residues 322–331 (GSSIMPGKVN) is SS loop. Ser-323 acts as the Proton acceptor in catalysis. Residues Ser-324 and Lys-329 each coordinate L-aspartate.

Belongs to the class-II fumarase/aspartase family. Aspartase subfamily. Homotetramer.

The catalysed reaction is L-aspartate = fumarate + NH4(+). Its function is as follows. Lyase involved in the degradation of canavanine, the delta-oxa-analog of arginine, allowing growth on canavanine as sole nitrogen and carbon source. Probably catalyzes the conversion of L-aspartate to fumarate and ammonia. This Pseudomonas canavaninivorans protein is Aspartate ammonia-lyase.